The following is a 335-amino-acid chain: Nod factor export ATP-binding protein I (335 aa).

The segment covering Met1–Glu10 has biased composition (basic and acidic residues). The tract at residues Met1–Pro22 is disordered. In terms of domain architecture, ABC transporter spans Ile37–Tyr267. Gly69–Ser76 contacts ATP.

The protein belongs to the ABC transporter superfamily. Lipooligosaccharide exporter (TC 3.A.1.102) family. The complex is composed of two ATP-binding proteins (NodI) and two transmembrane proteins (NodJ).

Its subcellular location is the cell inner membrane. Part of the ABC transporter complex NodIJ involved in the export of the nodulation factors (Nod factors), the bacterial signal molecules that induce symbiosis and subsequent nodulation induction. Nod factors are LCO (lipo-chitin oligosaccharide), a modified beta-1,4-linked N-acetylglucosamine oligosaccharide. This subunit is responsible for energy coupling to the transport system. The protein is Nod factor export ATP-binding protein I of Rhizobium meliloti (Ensifer meliloti).